Consider the following 518-residue polypeptide: Sugar transport protein MST3 (518 aa).

At 1 to 18 (MAGGAVVSTGAGKDYPGK) the chain is on the cytoplasmic side. A helical transmembrane segment spans residues 19–39 (LTLFVFFTCVVAATGGLIFGY). At 40–80 (DIGISGGVTSMDPFLRKFFPEVYRKKQMADKNNQYCKYDNQ) the chain is on the extracellular side. The helical transmembrane segment at 81 to 101 (LLQTFTSSLYLAALVSSFFAA) threads the bilayer. Over 102-117 (TVTRVLGRKWSMFAGG) the chain is Cytoplasmic. The chain crosses the membrane as a helical span at residues 118–138 (LTFLIGAALNGAAENVAMLIV). Over 139–140 (GR) the chain is Extracellular. A helical transmembrane segment spans residues 141–161 (ILLGVGVGFANQSVPVYLSEM). Over 162–167 (APARLR) the chain is Cytoplasmic. A helical transmembrane segment spans residues 168–188 (GMLNIGFQLMITIGILAAELI). Residues 189–202 (NYGTAKIKAGWGWR) lie on the Extracellular side of the membrane. A helical membrane pass occupies residues 203 to 223 (VSLALAAVPAAIITLGSLFLP). Over 224-290 (DTPNSLIDRG…YRAQLTMAIC (67 aa)) the chain is Cytoplasmic. The helical transmembrane segment at 291–311 (IPFFQQLTGINVIMFYAPVLF) threads the bilayer. Residues 312-322 (DTLGFKSDASL) lie on the Extracellular side of the membrane. The helical transmembrane segment at 323–343 (MSAVITGLVNVFATLVSIFTV) threads the bilayer. The Cytoplasmic portion of the chain corresponds to 344 to 351 (DRLGRRKL). A helical membrane pass occupies residues 352–372 (FLQGGAQMVVCQVVVGTLIAV). Topologically, residues 373-387 (KFGTSGIGDIPKGYA) are extracellular. A helical transmembrane segment spans residues 388-408 (AVVVLFICMYVAGFAWSWGPL). The Cytoplasmic segment spans residues 409-427 (GWLVPSEIFPLEIRPAGQS). A helical membrane pass occupies residues 428–448 (INVSVNMLFTFVIAQAFLTML). Residues 449–452 (CHMK) lie on the Extracellular side of the membrane. A helical transmembrane segment spans residues 453–473 (FGLFYFFAGWVVIMTVFIALF). At 474–518 (LPETKNVPIEEMVLVWKSHWFWRRFIGDHDVHVGANHVSNNKLQP) the chain is on the cytoplasmic side.

This sequence belongs to the major facilitator superfamily. Sugar transporter (TC 2.A.1.1) family. As to expression, highly expressed in roots. Expressed in xylem and sclerenchyma cells of roots. Expressed at low levels in leaves.

The protein localises to the membrane. Its function is as follows. Mediates active uptake of hexoses by sugar:proton symport. Can transport glucose, xylose and 3-O-methylglucose. May be involved in the accumulation of monosaccharides required for cell wall synthesis during root development. This is Sugar transport protein MST3 from Oryza sativa subsp. japonica (Rice).